The primary structure comprises 125 residues: Profilin-A (125 aa).

Ser-2 is modified (N-acetylserine).

Belongs to the profilin family. As to quaternary structure, occurs in many kinds of cells as a complex with monomeric actin in a 1:1 ratio.

It is found in the cytoplasm. The protein localises to the cytoskeleton. Its function is as follows. Binds to actin and affects the structure of the cytoskeleton. At high concentrations, profilin prevents the polymerization of actin, whereas it enhances it at low concentrations. By binding to PIP2, it inhibits the formation of IP3 and DG. This is Profilin-A (PROA) from Physarum polycephalum (Slime mold).